We begin with the raw amino-acid sequence, 458 residues long: Sensor histidine kinase ZraS (458 aa).

At 1 to 14 (MRFMQRSKDSLAKW) the chain is on the cytoplasmic side. The helical transmembrane segment at 15–35 (LSAILPVVIVGLVGLFAVTVI) threads the bilayer. The Periplasmic portion of the chain corresponds to 36 to 194 (RDYGRETAAA…SAEDREQRNT (159 aa)). A helical membrane pass occupies residues 195-215 (LIILFALATVLLASVLSFFWY). Topologically, residues 216-458 (RRYLRSRQLL…VNITRKDPQG (243 aa)) are cytoplasmic. One can recognise a Histidine kinase domain in the interval 244–451 (GVAHEIRNPL…RFTLWLPVNI (208 aa)). His247 carries the post-translational modification Phosphohistidine; by autocatalysis.

In terms of processing, autophosphorylated.

It localises to the cell inner membrane. It catalyses the reaction ATP + protein L-histidine = ADP + protein N-phospho-L-histidine.. With respect to regulation, activity of the ZraS/ZraR two-component system is repressed by the zinc-bound form of ZraP, which probably interacts with the periplasmic region of ZraS. Part of the Zra signaling pathway, an envelope stress response (ESR) system composed of the periplasmic accessory protein ZraP, the histidine kinase ZraS and the transcriptional regulator ZraR. The ZraPSR system contributes to antibiotic resistance and is important for membrane integrity in the presence of membrane-targeting biocides. ZraS is a member of the two-component regulatory system ZraS/ZraR. Functions as a membrane-associated sensor kinase that phosphorylates ZraR in response to high concentrations of Zn(2+) or Pb(2+) in the medium. This chain is Sensor histidine kinase ZraS (zraS), found in Escherichia coli O157:H7.